The primary structure comprises 292 residues: Tetratricopeptide repeat protein 1 (292 aa).

2 stretches are compositionally biased toward basic and acidic residues: residues 1–12 and 47–64; these read MEEKSEDCKVPE and KAAE…ECFH. A disordered region spans residues 1–125; that stretch reads MEEKSEDCKV…SAKLKEEGNE (125 aa). The segment covering 88–98 has biased composition (acidic residues); sequence SSSELDEEYLI. Ser90 is modified (phosphoserine). A compositionally biased stretch (basic and acidic residues) spans 99–125; that stretch reads ELEKNMPEEEKQKRREESAKLKEEGNE. TPR repeat units follow at residues 116–149, 155–188, and 189–222; these read SAKL…CPAC, SVLF…NPTY, and IRAI…DPSV.

Interacts with the GAP domain of NF1. Interacts (via TPR repeats) with HSP90AA1 and HSPA8.

This is Tetratricopeptide repeat protein 1 (Ttc1) from Mus musculus (Mouse).